A 256-amino-acid chain; its full sequence is Nuclear shuttle protein (256 aa).

Residues 21-42 (NSLIRQQSLFKRNVSKRRPFQT) carry the Bipartite nuclear localization signal motif. The Nuclear localization signal signature appears at 81 to 96 (DIAKSLPNRTRSYIKL). The tract at residues 150–187 (ELFGARIHSHGNLAIVPSLKDRFYIRHVLKRVISVEKD) is interaction with Arabidopsis thaliana NSI protein.

Belongs to the begomovirus nuclear shuttle protein family. As to quaternary structure, binds to single-stranded and double-stranded viral DNA. Interacts with the host nuclear shuttle interacting (NSI) protein. This interaction may allow NSP to recruit NSI monomers to the viral genome and thus regulate nuclear export of viral genome by NSP.

It is found in the host nucleus. The protein resides in the host cytoplasm. The protein localises to the host cell membrane. Binds to the genomic viral ssDNA, shuttles it into and out of the cell nucleus. Begomoviruses use 2 proteins to transport their DNA from cell to cell. The nuclear shuttle protein (NSP) shuttles it between nucleus and cytoplasm and the movement protein (MP) probably transports the DNA-NSP complex to the cell periphery and facilitates movement across the cell wall. This is Nuclear shuttle protein from Potato yellow mosaic virus (isolate Venezuela) (PYMV).